The chain runs to 751 residues: Catalase-peroxidase (751 aa).

The disordered stretch occupies residues Met-1–Arg-24. A cross-link (tryptophyl-tyrosyl-methioninium (Trp-Tyr) (with M-267)) is located at residues Trp-95 to Tyr-241. The active-site Proton acceptor is His-96. The tryptophyl-tyrosyl-methioninium (Tyr-Met) (with W-95) cross-link spans Tyr-241 to Met-267. His-282 is a binding site for heme b.

Belongs to the peroxidase family. Peroxidase/catalase subfamily. As to quaternary structure, homodimer or homotetramer. Requires heme b as cofactor. Formation of the three residue Trp-Tyr-Met cross-link is important for the catalase, but not the peroxidase activity of the enzyme.

It localises to the cytoplasm. It catalyses the reaction H2O2 + AH2 = A + 2 H2O. The catalysed reaction is 2 H2O2 = O2 + 2 H2O. Its function is as follows. Bifunctional enzyme with both catalase and broad-spectrum peroxidase activity. This is Catalase-peroxidase from Aspergillus oryzae (strain ATCC 42149 / RIB 40) (Yellow koji mold).